Reading from the N-terminus, the 456-residue chain is Bifunctional protein GlmU (456 aa).

The segment at 1 to 228 is pyrophosphorylase; sequence MPQNTLNIVI…SYLAAGVNNK (228 aa). Residues 11–14, lysine 25, glutamine 75, 80–81, 102–104, glycine 138, glutamate 153, asparagine 168, and asparagine 226 contribute to the UDP-N-acetyl-alpha-D-glucosamine site; these read LAAG, GT, and YGD. Position 104 (aspartate 104) interacts with Mg(2+). Asparagine 226 contacts Mg(2+). Positions 229-249 are linker; it reads LQLAELERIFQTEQAQELLKA. Residues 250–456 form an N-acetyltransferase region; the sequence is GVTLSDPARF…GWVRPEKDKQ (207 aa). UDP-N-acetyl-alpha-D-glucosamine-binding residues include arginine 332 and lysine 350. Histidine 362 (proton acceptor) is an active-site residue. UDP-N-acetyl-alpha-D-glucosamine is bound by residues tyrosine 365 and asparagine 376. Acetyl-CoA is bound by residues alanine 379, 385 to 386, serine 404, alanine 422, and arginine 439; that span reads NY.

This sequence in the N-terminal section; belongs to the N-acetylglucosamine-1-phosphate uridyltransferase family. It in the C-terminal section; belongs to the transferase hexapeptide repeat family. Homotrimer. It depends on Mg(2+) as a cofactor.

It is found in the cytoplasm. It carries out the reaction alpha-D-glucosamine 1-phosphate + acetyl-CoA = N-acetyl-alpha-D-glucosamine 1-phosphate + CoA + H(+). The enzyme catalyses N-acetyl-alpha-D-glucosamine 1-phosphate + UTP + H(+) = UDP-N-acetyl-alpha-D-glucosamine + diphosphate. The protein operates within nucleotide-sugar biosynthesis; UDP-N-acetyl-alpha-D-glucosamine biosynthesis; N-acetyl-alpha-D-glucosamine 1-phosphate from alpha-D-glucosamine 6-phosphate (route II): step 2/2. It participates in nucleotide-sugar biosynthesis; UDP-N-acetyl-alpha-D-glucosamine biosynthesis; UDP-N-acetyl-alpha-D-glucosamine from N-acetyl-alpha-D-glucosamine 1-phosphate: step 1/1. It functions in the pathway bacterial outer membrane biogenesis; LPS lipid A biosynthesis. Its function is as follows. Catalyzes the last two sequential reactions in the de novo biosynthetic pathway for UDP-N-acetylglucosamine (UDP-GlcNAc). The C-terminal domain catalyzes the transfer of acetyl group from acetyl coenzyme A to glucosamine-1-phosphate (GlcN-1-P) to produce N-acetylglucosamine-1-phosphate (GlcNAc-1-P), which is converted into UDP-GlcNAc by the transfer of uridine 5-monophosphate (from uridine 5-triphosphate), a reaction catalyzed by the N-terminal domain. The polypeptide is Bifunctional protein GlmU (Neisseria meningitidis serogroup C / serotype 2a (strain ATCC 700532 / DSM 15464 / FAM18)).